Here is a 248-residue protein sequence, read N- to C-terminus: Cutinase (248 aa).

Residues 1–17 (MRSLAILTTLLAGHAFA) form the signal peptide. A propeptide spanning residues 18–28 (YPKPAPQSVNR) is cleaved from the precursor. The lid covering the active site of the uncomplexed enzyme stretch occupies residues 31-70 (WPSINEFLSELAKVMPIGDTITAACDLISDGEDAAASLFG). Disulfide bonds link Cys55–Cys91 and Cys79–Cys153. Ser164 (nucleophile) is an active-site residue. A disulfide bridge connects residues Cys212 and Cys219. Residue Asp216 is part of the active site. His229 functions as the Proton donor/acceptor in the catalytic mechanism.

It belongs to the cutinase family.

Its subcellular location is the secreted. The enzyme catalyses cutin + H2O = cutin monomers.. Its activity is regulated as follows. Weakly inhibited by n-undecyl phosphonate (C11Y4). Activity unaffected by paraoxon. Functionally, catalyzes the hydrolysis of complex carboxylic polyesters found in the cell wall of plants. Degrades cutin, a macromolecule that forms the structure of the plant cuticle. In Hypocrea jecorina (strain QM6a) (Trichoderma reesei), this protein is Cutinase.